A 218-amino-acid chain; its full sequence is Ribose-5-phosphate isomerase A (218 aa).

Substrate contacts are provided by residues 28–31 (TGST), 81–84 (DGAD), and 94–97 (KGGG). The Proton acceptor role is filled by glutamate 103. Lysine 121 contributes to the substrate binding site.

The protein belongs to the ribose 5-phosphate isomerase family. Homodimer.

The enzyme catalyses aldehydo-D-ribose 5-phosphate = D-ribulose 5-phosphate. Its pathway is carbohydrate degradation; pentose phosphate pathway; D-ribose 5-phosphate from D-ribulose 5-phosphate (non-oxidative stage): step 1/1. Its function is as follows. Catalyzes the reversible conversion of ribose-5-phosphate to ribulose 5-phosphate. The polypeptide is Ribose-5-phosphate isomerase A (Vibrio vulnificus (strain CMCP6)).